Reading from the N-terminus, the 825-residue chain is Lon protease (825 aa).

The Lon N-terminal domain occupies 41–237 (LPIIFIPNTI…KVIQLLLEQK (197 aa)). Residue 388 to 395 (GPPGTGKT) participates in ATP binding. One can recognise a Lon proteolytic domain in the interval 625–805 (SNPPGVVTGL…DEVLYEALGL (181 aa)). Active-site residues include Ser711 and Lys754.

It belongs to the peptidase S16 family. As to quaternary structure, homohexamer. Organized in a ring with a central cavity.

The protein resides in the cytoplasm. The catalysed reaction is Hydrolysis of proteins in presence of ATP.. ATP-dependent serine protease that mediates the selective degradation of mutant and abnormal proteins as well as certain short-lived regulatory proteins. Required for cellular homeostasis and for survival from DNA damage and developmental changes induced by stress. Degrades polypeptides processively to yield small peptide fragments that are 5 to 10 amino acids long. Binds to DNA in a double-stranded, site-specific manner. The protein is Lon protease of Methanosphaera stadtmanae (strain ATCC 43021 / DSM 3091 / JCM 11832 / MCB-3).